A 240-amino-acid polypeptide reads, in one-letter code: Biosynthetic peptidoglycan transglycosylase (240 aa).

The helical transmembrane segment at Ala-12–Pro-31 threads the bilayer.

Belongs to the glycosyltransferase 51 family.

It is found in the cell inner membrane. The enzyme catalyses [GlcNAc-(1-&gt;4)-Mur2Ac(oyl-L-Ala-gamma-D-Glu-L-Lys-D-Ala-D-Ala)](n)-di-trans,octa-cis-undecaprenyl diphosphate + beta-D-GlcNAc-(1-&gt;4)-Mur2Ac(oyl-L-Ala-gamma-D-Glu-L-Lys-D-Ala-D-Ala)-di-trans,octa-cis-undecaprenyl diphosphate = [GlcNAc-(1-&gt;4)-Mur2Ac(oyl-L-Ala-gamma-D-Glu-L-Lys-D-Ala-D-Ala)](n+1)-di-trans,octa-cis-undecaprenyl diphosphate + di-trans,octa-cis-undecaprenyl diphosphate + H(+). It functions in the pathway cell wall biogenesis; peptidoglycan biosynthesis. Its function is as follows. Peptidoglycan polymerase that catalyzes glycan chain elongation from lipid-linked precursors. In Pseudomonas fluorescens (strain Pf0-1), this protein is Biosynthetic peptidoglycan transglycosylase.